The chain runs to 432 residues: Methylenetetrahydrofolate--tRNA-(uracil-5-)-methyltransferase TrmFO (432 aa).

Residue glycine 7–glycine 12 coordinates FAD.

It belongs to the MnmG family. TrmFO subfamily. Requires FAD as cofactor.

The protein localises to the cytoplasm. It catalyses the reaction uridine(54) in tRNA + (6R)-5,10-methylene-5,6,7,8-tetrahydrofolate + NADH + H(+) = 5-methyluridine(54) in tRNA + (6S)-5,6,7,8-tetrahydrofolate + NAD(+). The enzyme catalyses uridine(54) in tRNA + (6R)-5,10-methylene-5,6,7,8-tetrahydrofolate + NADPH + H(+) = 5-methyluridine(54) in tRNA + (6S)-5,6,7,8-tetrahydrofolate + NADP(+). Its function is as follows. Catalyzes the folate-dependent formation of 5-methyl-uridine at position 54 (M-5-U54) in all tRNAs. The sequence is that of Methylenetetrahydrofolate--tRNA-(uracil-5-)-methyltransferase TrmFO from Anoxybacillus flavithermus (strain DSM 21510 / WK1).